The sequence spans 1132 residues: Fas-binding factor 1 homolog (1132 aa).

Disordered stretches follow at residues 18–50 (DDLLGYDDEGPAKSSQPAGVSSGRARGSSLQAS), 65–84 (AEDMEAAEGSSISDADPQAV), and 89–570 (KEMD…QSYE). A compositionally biased stretch (low complexity) spans 35 to 46 (AGVSSGRARGSS). 2 stretches are compositionally biased toward basic and acidic residues: residues 134–148 (APEKGESAPEMDKKP) and 189–206 (GSERRPERKTELGKEKDP). A compositionally biased stretch (acidic residues) spans 226–235 (TFEDDDDDMM). 2 stretches are compositionally biased toward basic and acidic residues: residues 244–270 (QKGDQKHGKKAEEEEVRPARSKLDELL) and 278–303 (ILERPGAGEHREFKLDKKYQKQPEKE). 2 stretches are compositionally biased toward polar residues: residues 331–341 (RQSVSRFSAEN) and 388–410 (AKTSPVVSSQQLLAKEQATSKPN). Low complexity-rich tracts occupy residues 458–480 (ATSTGAAAQAAALQDKAASADSS) and 511–520 (PSDPAASSPA). The span at 534–548 (TMPSTPLQAASQLQA) shows a compositional bias: polar residues. 3 coiled-coil regions span residues 576–727 (RAAL…TSAT), 769–882 (ARQR…LAVE), and 918–1044 (LAKE…HKKL).

It localises to the cytoplasm. The protein resides in the cytoskeleton. Its subcellular location is the microtubule organizing center. It is found in the centrosome. The protein localises to the centriole. It localises to the spindle pole. The protein resides in the cell junction. In terms of biological role, keratin-binding protein required for epithelial cell polarization. Required for ciliogenesis. In Gallus gallus (Chicken), this protein is Fas-binding factor 1 homolog (FBF1).